We begin with the raw amino-acid sequence, 319 residues long: Acetyl esterase (319 aa).

Positions 91–93 (HGG) match the Involved in the stabilization of the negatively charged intermediate by the formation of the oxyanion hole motif. Residues Ser-165, Asp-262, and His-292 contribute to the active site.

It belongs to the 'GDXG' lipolytic enzyme family. As to quaternary structure, homodimer. Interacts with MalT and MelA.

The protein resides in the cytoplasm. Its function is as follows. Displays esterase activity towards short chain fatty esters (acyl chain length of up to 8 carbons). Able to hydrolyze triacetylglycerol (triacetin) and tributyrylglycerol (tributyrin), but not trioleylglycerol (triolein) or cholesterol oleate. Negatively regulates MalT activity by antagonizing maltotriose binding. Inhibits MelA galactosidase activity. This Escherichia coli O17:K52:H18 (strain UMN026 / ExPEC) protein is Acetyl esterase.